The following is a 114-amino-acid chain: Notch-regulated ankyrin repeat-containing protein (114 aa).

ANK repeat units follow at residues 50-79 (EGQTALHQSVIDGNLELVKLLVKFGADIRL) and 83-112 (DGWSALHIAAFGGHQDIVLYLITKAKYAAS).

It belongs to the NRARP family. Interacts with LEF1.

Downstream effector of Notch signaling. Involved in the regulation of liver cancer cells self-renewal. Involved in angiogenesis acting downstream of Notch at branch points to regulate vascular density. Proposed to integrate endothelial Notch and Wnt signaling to control stalk cell proliferation and to stablilize new endothelial connections during angiogenesis. During somitogenesis involved in maintenance of proper somite segmentation and proper numbers of somites and vertebrae. Required for proper anterior-posterior somite patterning. Proposed to function in a negative feedback loop to destabilize Notch 1 intracellular domain (NICD) and down-regulate the Notch signal, preventing expansion of the Notch signal into the anterior somite domain. The polypeptide is Notch-regulated ankyrin repeat-containing protein (NRARP) (Homo sapiens (Human)).